The sequence spans 463 residues: Argininosuccinate lyase (463 aa).

Belongs to the lyase 1 family. Argininosuccinate lyase subfamily.

The protein localises to the cytoplasm. It catalyses the reaction 2-(N(omega)-L-arginino)succinate = fumarate + L-arginine. Its pathway is amino-acid biosynthesis; L-arginine biosynthesis; L-arginine from L-ornithine and carbamoyl phosphate: step 3/3. In Chlorobaculum parvum (strain DSM 263 / NCIMB 8327) (Chlorobium vibrioforme subsp. thiosulfatophilum), this protein is Argininosuccinate lyase.